We begin with the raw amino-acid sequence, 322 residues long: tRNA U34 carboxymethyltransferase (322 aa).

Residues Lys-92, Trp-106, Lys-111, Gly-131, Asp-153–Ser-155, Val-181–Glu-182, Met-196, Tyr-200, and Arg-315 each bind carboxy-S-adenosyl-L-methionine.

The protein belongs to the class I-like SAM-binding methyltransferase superfamily. CmoB family. As to quaternary structure, homotetramer.

The enzyme catalyses carboxy-S-adenosyl-L-methionine + 5-hydroxyuridine(34) in tRNA = 5-carboxymethoxyuridine(34) in tRNA + S-adenosyl-L-homocysteine + H(+). In terms of biological role, catalyzes carboxymethyl transfer from carboxy-S-adenosyl-L-methionine (Cx-SAM) to 5-hydroxyuridine (ho5U) to form 5-carboxymethoxyuridine (cmo5U) at position 34 in tRNAs. This chain is tRNA U34 carboxymethyltransferase, found in Pseudoalteromonas translucida (strain TAC 125).